We begin with the raw amino-acid sequence, 124 residues long: Large ribosomal subunit protein uL18 (124 aa).

It belongs to the universal ribosomal protein uL18 family. Part of the 50S ribosomal subunit; part of the 5S rRNA/L5/L18/L25 subcomplex. Contacts the 5S and 23S rRNAs.

Functionally, this is one of the proteins that bind and probably mediate the attachment of the 5S RNA into the large ribosomal subunit, where it forms part of the central protuberance. The sequence is that of Large ribosomal subunit protein uL18 from Parafrankia sp. (strain EAN1pec).